The following is a 356-amino-acid chain: Fructose import permease protein FruF (356 aa).

Transmembrane regions (helical) follow at residues 25–45, 77–97, 113–133, 180–200, 231–251, 268–290, and 308–328; these read IVAFILLVIICTIFQHDFLAL, LVISTAGIDLSVGSVMAVAGA, ILIALAVGLAIGCVNGALVSF, FILGIPANFVIAVIIVILVGL, ILFLVYAISGFLAAIAGLFAT, MYAILAVVIGGTSLLGGKFSLAG, and LGVNAEATPAFFAVVVIVICV.

This sequence belongs to the binding-protein-dependent transport system permease family. The complex is composed of an ATP-binding protein (FruK), two transmembrane proteins (FruF and FruG) and a solute-binding protein (FruE).

It is found in the cell membrane. In terms of biological role, part of the high-affinity ABC transporter complex FruEKFG involved in fructose uptake. Can also transport ribose and xylose, with lower affinity. Probably responsible for the translocation of the substrate across the membrane. The protein is Fructose import permease protein FruF of Bifidobacterium longum (strain NCC 2705).